The primary structure comprises 131 residues: UPF0102 protein YraN (131 aa).

Over residues 1-19 (MATVPTRSGSPRQLTTKQT) the composition is skewed to polar residues. Residues 1–20 (MATVPTRSGSPRQLTTKQTG) are disordered.

Belongs to the UPF0102 family.

The protein is UPF0102 protein YraN of Escherichia fergusonii (strain ATCC 35469 / DSM 13698 / CCUG 18766 / IAM 14443 / JCM 21226 / LMG 7866 / NBRC 102419 / NCTC 12128 / CDC 0568-73).